The following is a 139-amino-acid chain: D-ribose pyranase (139 aa).

Catalysis depends on His20, which acts as the Proton donor. Residues Asp28, His106, and 128–130 (YAN) each bind substrate.

It belongs to the RbsD / FucU family. RbsD subfamily. In terms of assembly, homodecamer.

It localises to the cytoplasm. It carries out the reaction beta-D-ribopyranose = beta-D-ribofuranose. It participates in carbohydrate metabolism; D-ribose degradation; D-ribose 5-phosphate from beta-D-ribopyranose: step 1/2. Catalyzes the interconversion of beta-pyran and beta-furan forms of D-ribose. The protein is D-ribose pyranase of Escherichia coli O127:H6 (strain E2348/69 / EPEC).